Reading from the N-terminus, the 301-residue chain is N-acetylmuramic acid 6-phosphate etherase (301 aa).

The 164-residue stretch at 59-222 folds into the SIS domain; sequence TSEALMHGGR…STSVMVKLGK (164 aa). Glu87 serves as the catalytic Proton donor. Glu118 is an active-site residue.

It belongs to the GCKR-like family. MurNAc-6-P etherase subfamily. Homodimer.

The catalysed reaction is N-acetyl-D-muramate 6-phosphate + H2O = N-acetyl-D-glucosamine 6-phosphate + (R)-lactate. It functions in the pathway amino-sugar metabolism; N-acetylmuramate degradation. In terms of biological role, specifically catalyzes the cleavage of the D-lactyl ether substituent of MurNAc 6-phosphate, producing GlcNAc 6-phosphate and D-lactate. The chain is N-acetylmuramic acid 6-phosphate etherase from Picosynechococcus sp. (strain ATCC 27264 / PCC 7002 / PR-6) (Agmenellum quadruplicatum).